The following is a 387-amino-acid chain: 3-ketoacyl-CoA thiolase (387 aa).

C91 acts as the Acyl-thioester intermediate in catalysis. Catalysis depends on proton acceptor residues H343 and C373.

This sequence belongs to the thiolase-like superfamily. Thiolase family. In terms of assembly, heterotetramer of two alpha chains (FadB) and two beta chains (FadA).

Its subcellular location is the cytoplasm. The enzyme catalyses an acyl-CoA + acetyl-CoA = a 3-oxoacyl-CoA + CoA. Its pathway is lipid metabolism; fatty acid beta-oxidation. In terms of biological role, catalyzes the final step of fatty acid oxidation in which acetyl-CoA is released and the CoA ester of a fatty acid two carbons shorter is formed. The sequence is that of 3-ketoacyl-CoA thiolase from Shewanella oneidensis (strain ATCC 700550 / JCM 31522 / CIP 106686 / LMG 19005 / NCIMB 14063 / MR-1).